A 239-amino-acid chain; its full sequence is Purine nucleoside phosphorylase DeoD-type (239 aa).

His5 is an a purine D-ribonucleoside binding site. The phosphate site is built by Gly21 and Arg25. Lys27 carries the N6-acetyllysine modification. Residues Arg44 and 88-91 (RVGS) each bind phosphate. A purine D-ribonucleoside contacts are provided by residues 180–182 (EME) and 204–205 (SD). Asp205 (proton donor) is an active-site residue.

The protein belongs to the PNP/UDP phosphorylase family. As to quaternary structure, homohexamer; trimer of homodimers.

The catalysed reaction is a purine D-ribonucleoside + phosphate = a purine nucleobase + alpha-D-ribose 1-phosphate. It carries out the reaction a purine 2'-deoxy-D-ribonucleoside + phosphate = a purine nucleobase + 2-deoxy-alpha-D-ribose 1-phosphate. Functionally, catalyzes the reversible phosphorolytic breakdown of the N-glycosidic bond in the beta-(deoxy)ribonucleoside molecules, with the formation of the corresponding free purine bases and pentose-1-phosphate. The chain is Purine nucleoside phosphorylase DeoD-type from Shigella dysenteriae serotype 1 (strain Sd197).